Here is a 199-residue protein sequence, read N- to C-terminus: Recombination protein RecR (199 aa).

The C4-type zinc-finger motif lies at 58–73 (CQTCRILSETDLCSLC). One can recognise a Toprim domain in the interval 81–176 (GQLCVVEMPS…TTTRIAHGVP (96 aa)).

This sequence belongs to the RecR family.

Its function is as follows. May play a role in DNA repair. It seems to be involved in an RecBC-independent recombinational process of DNA repair. It may act with RecF and RecO. The polypeptide is Recombination protein RecR (Nitrosococcus oceani (strain ATCC 19707 / BCRC 17464 / JCM 30415 / NCIMB 11848 / C-107)).